Here is a 55-residue protein sequence, read N- to C-terminus: uncharacterized protein (55 aa).

The disordered stretch occupies residues 1–25 (MKNNDKKKEVQRKYREEIKKKKQKN). The helical transmembrane segment at 35–55 (TIIVVTIIVLFIFFTYTLQGF) threads the bilayer.

The protein resides in the membrane. This is an uncharacterized protein from Bacillus subtilis (strain 168).